We begin with the raw amino-acid sequence, 65 residues long: Large ribosomal subunit protein bL35 (65 aa).

The disordered stretch occupies residues 1 to 26 (MPKMKTNRASAKRFKKTASGGFKAGQ).

It belongs to the bacterial ribosomal protein bL35 family.

In Oenococcus oeni (strain ATCC BAA-331 / PSU-1), this protein is Large ribosomal subunit protein bL35.